The chain runs to 308 residues: Putative integrase/recombinase y4qK (308 aa).

The Core-binding (CB) domain maps to 15–97 (LVMTPLRQRM…ALRFFFSVTL (83 aa)). The region spanning 115 to 288 (KLPIILSPDE…ATNKVCATSS (174 aa)) is the Tyr recombinase domain. Catalysis depends on residues Arg150, Lys175, His240, Arg243, and His266. Residue Tyr275 is the O-(3'-phospho-DNA)-tyrosine intermediate of the active site.

Belongs to the 'phage' integrase family.

Functionally, may function as an integrase. The sequence is that of Putative integrase/recombinase y4qK from Sinorhizobium fredii (strain NBRC 101917 / NGR234).